The following is a 313-amino-acid chain: Tyrosine recombinase XerC (313 aa).

A Core-binding (CB) domain is found at 1 to 85 (MNDQVEAFLR…AVKSFFAFLT (85 aa)). The Tyr recombinase domain maps to 106-291 (DLPRALTPHQ…NHASSAQPVR (186 aa)). Catalysis depends on residues Arg-147, Lys-171, His-243, Arg-246, and His-269. Tyr-278 (O-(3'-phospho-DNA)-tyrosine intermediate) is an active-site residue.

This sequence belongs to the 'phage' integrase family. XerC subfamily. In terms of assembly, forms a cyclic heterotetrameric complex composed of two molecules of XerC and two molecules of XerD.

The protein localises to the cytoplasm. Its function is as follows. Site-specific tyrosine recombinase, which acts by catalyzing the cutting and rejoining of the recombining DNA molecules. The XerC-XerD complex is essential to convert dimers of the bacterial chromosome into monomers to permit their segregation at cell division. It also contributes to the segregational stability of plasmids. The chain is Tyrosine recombinase XerC from Roseiflexus sp. (strain RS-1).